Consider the following 177-residue polypeptide: Large ribosomal subunit protein uL6 (177 aa).

It belongs to the universal ribosomal protein uL6 family. As to quaternary structure, part of the 50S ribosomal subunit.

Its function is as follows. This protein binds to the 23S rRNA, and is important in its secondary structure. It is located near the subunit interface in the base of the L7/L12 stalk, and near the tRNA binding site of the peptidyltransferase center. The polypeptide is Large ribosomal subunit protein uL6 (Photobacterium profundum (strain SS9)).